The primary structure comprises 369 residues: Peptide chain release factor 2 (369 aa).

Q250 is modified (N5-methylglutamine).

Belongs to the prokaryotic/mitochondrial release factor family. In terms of processing, methylated by PrmC. Methylation increases the termination efficiency of RF2.

Its subcellular location is the cytoplasm. In terms of biological role, peptide chain release factor 2 directs the termination of translation in response to the peptide chain termination codons UGA and UAA. The chain is Peptide chain release factor 2 (prfB) from Rickettsia typhi (strain ATCC VR-144 / Wilmington).